A 388-amino-acid chain; its full sequence is Mannitol-1-phosphate 5-dehydrogenase (388 aa).

5–16 provides a ligand contact to NAD(+); the sequence is AVHFGGGNIGRG. Residue K213 is part of the active site.

The protein belongs to the mannitol dehydrogenase family. In terms of assembly, monomer.

It catalyses the reaction D-mannitol 1-phosphate + NAD(+) = beta-D-fructose 6-phosphate + NADH + H(+). In terms of biological role, catalyzes the NAD(H)-dependent interconversion of D-fructose 6-phosphate and D-mannitol 1-phosphate in the mannitol metabolic pathway. The sequence is that of Mannitol-1-phosphate 5-dehydrogenase from Coccidioides immitis (strain RS) (Valley fever fungus).